The chain runs to 101 residues: Urease subunit beta (101 aa).

Belongs to the urease beta subunit family. Heterotrimer of UreA (gamma), UreB (beta) and UreC (alpha) subunits. Three heterotrimers associate to form the active enzyme.

Its subcellular location is the cytoplasm. The catalysed reaction is urea + 2 H2O + H(+) = hydrogencarbonate + 2 NH4(+). It functions in the pathway nitrogen metabolism; urea degradation; CO(2) and NH(3) from urea (urease route): step 1/1. The chain is Urease subunit beta from Pseudomonas paraeruginosa (strain DSM 24068 / PA7) (Pseudomonas aeruginosa (strain PA7)).